The following is a 511-amino-acid chain: Ribose import ATP-binding protein RbsA (511 aa).

ABC transporter domains follow at residues 13–249 (VSMD…VGRA) and 260–503 (ALGE…AGIA). 45 to 52 (GENGAGKS) contacts ATP.

Belongs to the ABC transporter superfamily. Ribose importer (TC 3.A.1.2.1) family. In terms of assembly, the complex is composed of an ATP-binding protein (RbsA), two transmembrane proteins (RbsC) and a solute-binding protein (RbsB).

It localises to the cell inner membrane. It carries out the reaction D-ribose(out) + ATP + H2O = D-ribose(in) + ADP + phosphate + H(+). Functionally, part of the ABC transporter complex RbsABC involved in ribose import. Responsible for energy coupling to the transport system. The chain is Ribose import ATP-binding protein RbsA from Roseobacter denitrificans (strain ATCC 33942 / OCh 114) (Erythrobacter sp. (strain OCh 114)).